The primary structure comprises 325 residues: D site-binding protein (325 aa).

3 disordered regions span residues 1 to 100, 124 to 198, and 212 to 255; these read MARP…PGLL, LEHG…DPDT, and LALS…EQKD. Residues 17 to 28 show a composition bias toward gly residues; it reads GPTGAPPGGGAL. Composition is skewed to low complexity over residues 29–38 and 71–80; these read LGLRSLLQGT and AGPADASAGA. Phosphoserine is present on serine 86. The span at 88 to 100 shows a compositional bias: low complexity; that stretch reads RGRPGAAPGPGLL. Over residues 129 to 153 the composition is skewed to pro residues; it reads PPSPPPPGGPSPAPSPVRTPAPSPR. The span at 166-176 shows a compositional bias: low complexity; sequence PGHAPARAALG. Residues 221 to 236 show a composition bias toward basic and acidic residues; it reads ETFDPRRHRFSEEELK. Residues 255–318 enclose the bZIP domain; that stretch reads DEKYWSRRYK…SHYRAVLSRY (64 aa). A basic motif region spans residues 257–279; that stretch reads KYWSRRYKNNEAAKRSRDARRLK. Positions 283 to 297 are leucine-zipper; it reads ISVRAAFLEKENALL.

Belongs to the bZIP family. PAR subfamily. As to quaternary structure, binds DNA as a homodimer or a heterodimer. Can form a heterodimer with TEF.

The protein localises to the nucleus. Its function is as follows. This transcriptional activator recognizes and binds to the sequence 5'-RTTAYGTAAY-3' found in the promoter of genes such as albumin, CYP2A4 and CYP2A5. It is not essential for circadian rhythm generation, but modulates important clock output genes. May be a direct target for regulation by the circadian pacemaker component clock. May affect circadian period and sleep regulation. This is D site-binding protein (DBP) from Bos taurus (Bovine).